A 189-amino-acid chain; its full sequence is Calcyphosin (189 aa).

EF-hand domains lie at 21-56 (LGIQGLARFFRRLDRDRSRSLDSRELQRGLAELGLV), 57-92 (LDTAEAEGVCRRWDRDGSGTLDLEEFLRALRPPMSQ), 93-128 (AREAVIAAAFAKLDRSGDGVVTVDDLRGVYSGRTHP), and 136-172 (TEEEVLRRFLDNFDSSEKDGQVTLAEFQDYYSGVSAS). Residues Asp34, Asp36, Ser38, Ser40, Glu45, Asp70, Asp72, Ser74, Thr76, Glu81, Asp106, Ser108, Asp110, and Asp117 each contribute to the Ca(2+) site. Ser40 is subject to Phosphoserine; by PKA.

As to quaternary structure, monomer. Does not form oligomers in the presence of calcium. In terms of processing, phosphorylated in response to thyrotropin and cAMP. As to expression, detected in thyroid, salivary gland, lung, brain and cerebellum (at protein level).

The protein localises to the cytoplasm. Calcium-binding protein. May play a role in cellular signaling events (Potential). This is Calcyphosin (CAPS) from Canis lupus familiaris (Dog).